We begin with the raw amino-acid sequence, 227 residues long: MSTWKNLFLQDSASPLMELLMCFHDHAMLILILITIMVSQMLLSMLFNKLSHRYLLEGQLIETIWTIIPAIILILIALPSLRLLYILDEINNPQLLIKIIGHQWYWSYEYSDYKNIEFDSYMIPTKELNSFNFRLLEVDNRTPIPYKTQIRILVTSADVIHSWTIPSMSIKIDGTPGRLNQANLIANRSSIFFGQCSEICGANHSFMPIVLESITPNLFLNWVISKA.

Over 1–26 (MSTWKNLFLQDSASPLMELLMCFHDH) the chain is Mitochondrial intermembrane. The helical transmembrane segment at 27–48 (AMLILILITIMVSQMLLSMLFN) threads the bilayer. At 49-62 (KLSHRYLLEGQLIE) the chain is on the mitochondrial matrix side. The helical transmembrane segment at 63–82 (TIWTIIPAIILILIALPSLR) threads the bilayer. The Mitochondrial intermembrane segment spans residues 83 to 227 (LLYILDEINN…LFLNWVISKA (145 aa)). Cu cation contacts are provided by His161, Cys196, Glu198, Cys200, His204, and Met207. Glu198 is a binding site for Mg(2+).

This sequence belongs to the cytochrome c oxidase subunit 2 family. In terms of assembly, component of the cytochrome c oxidase (complex IV, CIV), a multisubunit enzyme composed of a catalytic core of 3 subunits and several supernumerary subunits. The complex exists as a monomer or a dimer and forms supercomplexes (SCs) in the inner mitochondrial membrane with ubiquinol-cytochrome c oxidoreductase (cytochrome b-c1 complex, complex III, CIII). Requires Cu cation as cofactor.

It is found in the mitochondrion inner membrane. The enzyme catalyses 4 Fe(II)-[cytochrome c] + O2 + 8 H(+)(in) = 4 Fe(III)-[cytochrome c] + 2 H2O + 4 H(+)(out). Its function is as follows. Component of the cytochrome c oxidase, the last enzyme in the mitochondrial electron transport chain which drives oxidative phosphorylation. The respiratory chain contains 3 multisubunit complexes succinate dehydrogenase (complex II, CII), ubiquinol-cytochrome c oxidoreductase (cytochrome b-c1 complex, complex III, CIII) and cytochrome c oxidase (complex IV, CIV), that cooperate to transfer electrons derived from NADH and succinate to molecular oxygen, creating an electrochemical gradient over the inner membrane that drives transmembrane transport and the ATP synthase. Cytochrome c oxidase is the component of the respiratory chain that catalyzes the reduction of oxygen to water. Electrons originating from reduced cytochrome c in the intermembrane space (IMS) are transferred via the dinuclear copper A center (CU(A)) of subunit 2 and heme A of subunit 1 to the active site in subunit 1, a binuclear center (BNC) formed by heme A3 and copper B (CU(B)). The BNC reduces molecular oxygen to 2 water molecules using 4 electrons from cytochrome c in the IMS and 4 protons from the mitochondrial matrix. This chain is Cytochrome c oxidase subunit 2 (COII), found in Sitophilus granarius (Granary weevil).